The following is a 237-amino-acid chain: Phosphoribosylaminoimidazole-succinocarboxamide synthase (237 aa).

Belongs to the SAICAR synthetase family.

It catalyses the reaction 5-amino-1-(5-phospho-D-ribosyl)imidazole-4-carboxylate + L-aspartate + ATP = (2S)-2-[5-amino-1-(5-phospho-beta-D-ribosyl)imidazole-4-carboxamido]succinate + ADP + phosphate + 2 H(+). It functions in the pathway purine metabolism; IMP biosynthesis via de novo pathway; 5-amino-1-(5-phospho-D-ribosyl)imidazole-4-carboxamide from 5-amino-1-(5-phospho-D-ribosyl)imidazole-4-carboxylate: step 1/2. The polypeptide is Phosphoribosylaminoimidazole-succinocarboxamide synthase (Psychrobacter cryohalolentis (strain ATCC BAA-1226 / DSM 17306 / VKM B-2378 / K5)).